The sequence spans 560 residues: Dihydroxy-acid dehydratase (560 aa).

Residue Cys-52 participates in [2Fe-2S] cluster binding. Asp-84 is a binding site for Mg(2+). Cys-125 is a binding site for [2Fe-2S] cluster. Mg(2+)-binding residues include Asp-126 and Lys-127. Lys-127 carries the N6-carboxylysine modification. Cys-197 serves as a coordination point for [2Fe-2S] cluster. Glu-449 lines the Mg(2+) pocket. Ser-475 (proton acceptor) is an active-site residue.

Belongs to the IlvD/Edd family. In terms of assembly, homodimer. The cofactor is [2Fe-2S] cluster. Mg(2+) is required as a cofactor.

It catalyses the reaction (2R)-2,3-dihydroxy-3-methylbutanoate = 3-methyl-2-oxobutanoate + H2O. The catalysed reaction is (2R,3R)-2,3-dihydroxy-3-methylpentanoate = (S)-3-methyl-2-oxopentanoate + H2O. It participates in amino-acid biosynthesis; L-isoleucine biosynthesis; L-isoleucine from 2-oxobutanoate: step 3/4. The protein operates within amino-acid biosynthesis; L-valine biosynthesis; L-valine from pyruvate: step 3/4. In terms of biological role, functions in the biosynthesis of branched-chain amino acids. Catalyzes the dehydration of (2R,3R)-2,3-dihydroxy-3-methylpentanoate (2,3-dihydroxy-3-methylvalerate) into 2-oxo-3-methylpentanoate (2-oxo-3-methylvalerate) and of (2R)-2,3-dihydroxy-3-methylbutanoate (2,3-dihydroxyisovalerate) into 2-oxo-3-methylbutanoate (2-oxoisovalerate), the penultimate precursor to L-isoleucine and L-valine, respectively. In Sulfurisphaera tokodaii (strain DSM 16993 / JCM 10545 / NBRC 100140 / 7) (Sulfolobus tokodaii), this protein is Dihydroxy-acid dehydratase.